Reading from the N-terminus, the 200-residue chain is Prophage tail fiber assembly protein homolog TfaE (200 aa).

This sequence belongs to the tfa family.

In Escherichia coli (strain K12), this protein is Prophage tail fiber assembly protein homolog TfaE (tfaE).